The sequence spans 94 residues: Acylphosphatase (94 aa).

Residues 8–94 (TLFIIVHGKV…GRRFKHFAQH (87 aa)) form the Acylphosphatase-like domain. Catalysis depends on residues Arg-23 and Asn-41. Positions 69–94 (PPAASVTELESRREDGGRRFKHFAQH) are disordered. A compositionally biased stretch (basic and acidic residues) spans 77 to 86 (LESRREDGGR).

Belongs to the acylphosphatase family.

It catalyses the reaction an acyl phosphate + H2O = a carboxylate + phosphate + H(+). This Bordetella avium (strain 197N) protein is Acylphosphatase (acyP).